Reading from the N-terminus, the 257-residue chain is Imidazole glycerol phosphate synthase subunit HisF (257 aa).

Active-site residues include D11 and D130.

The protein belongs to the HisA/HisF family. In terms of assembly, heterodimer of HisH and HisF.

The protein localises to the cytoplasm. The enzyme catalyses 5-[(5-phospho-1-deoxy-D-ribulos-1-ylimino)methylamino]-1-(5-phospho-beta-D-ribosyl)imidazole-4-carboxamide + L-glutamine = D-erythro-1-(imidazol-4-yl)glycerol 3-phosphate + 5-amino-1-(5-phospho-beta-D-ribosyl)imidazole-4-carboxamide + L-glutamate + H(+). It functions in the pathway amino-acid biosynthesis; L-histidine biosynthesis; L-histidine from 5-phospho-alpha-D-ribose 1-diphosphate: step 5/9. In terms of biological role, IGPS catalyzes the conversion of PRFAR and glutamine to IGP, AICAR and glutamate. The HisF subunit catalyzes the cyclization activity that produces IGP and AICAR from PRFAR using the ammonia provided by the HisH subunit. This chain is Imidazole glycerol phosphate synthase subunit HisF, found in Aliivibrio salmonicida (strain LFI1238) (Vibrio salmonicida (strain LFI1238)).